A 303-amino-acid polypeptide reads, in one-letter code: Protoheme IX farnesyltransferase (303 aa).

Transmembrane regions (helical) follow at residues Met-25 to Met-45, Ile-54 to Leu-74, Cys-118 to Val-138, Ile-166 to Val-186, Leu-230 to Ile-250, and Phe-280 to Ile-300.

It belongs to the UbiA prenyltransferase family. Protoheme IX farnesyltransferase subfamily. As to quaternary structure, interacts with CtaA.

It localises to the cell membrane. The enzyme catalyses heme b + (2E,6E)-farnesyl diphosphate + H2O = Fe(II)-heme o + diphosphate. It participates in porphyrin-containing compound metabolism; heme O biosynthesis; heme O from protoheme: step 1/1. Converts heme B (protoheme IX) to heme O by substitution of the vinyl group on carbon 2 of heme B porphyrin ring with a hydroxyethyl farnesyl side group. The chain is Protoheme IX farnesyltransferase from Staphylococcus epidermidis (strain ATCC 35984 / DSM 28319 / BCRC 17069 / CCUG 31568 / BM 3577 / RP62A).